Consider the following 506-residue polypeptide: Glycerol kinase (506 aa).

ADP is bound at residue Thr-14. ATP is bound by residues Thr-14, Thr-15, and Ser-16. Sn-glycerol 3-phosphate is bound at residue Thr-14. Position 18 (Arg-18) interacts with ADP. Sn-glycerol 3-phosphate-binding residues include Arg-84, Glu-85, and Tyr-136. 3 residues coordinate glycerol: Arg-84, Glu-85, and Tyr-136. Residue His-232 is modified to Phosphohistidine; by HPr. Residue Asp-246 participates in sn-glycerol 3-phosphate binding. The glycerol site is built by Asp-246 and Gln-247. ADP contacts are provided by Thr-268 and Gly-311. ATP contacts are provided by Thr-268, Gly-311, Gln-315, and Gly-412. Residues Gly-412 and Asn-416 each coordinate ADP.

This sequence belongs to the FGGY kinase family. As to quaternary structure, homotetramer and homodimer (in equilibrium). The phosphoenolpyruvate-dependent sugar phosphotransferase system (PTS), including enzyme I, and histidine-containing protein (HPr) are required for the phosphorylation of His-232, which leads to the activation of the enzyme.

It catalyses the reaction glycerol + ATP = sn-glycerol 3-phosphate + ADP + H(+). Its pathway is polyol metabolism; glycerol degradation via glycerol kinase pathway; sn-glycerol 3-phosphate from glycerol: step 1/1. Its activity is regulated as follows. Activated by phosphorylation and inhibited by fructose 1,6-bisphosphate (FBP). Functionally, key enzyme in the regulation of glycerol uptake and metabolism. Catalyzes the phosphorylation of glycerol to yield sn-glycerol 3-phosphate. This chain is Glycerol kinase, found in Enterococcus casseliflavus (Enterococcus flavescens).